The chain runs to 97 residues: Co-chaperonin GroES (97 aa).

It belongs to the GroES chaperonin family. Heptamer of 7 subunits arranged in a ring. Interacts with the chaperonin GroEL.

Its subcellular location is the cytoplasm. Functionally, together with the chaperonin GroEL, plays an essential role in assisting protein folding. The GroEL-GroES system forms a nano-cage that allows encapsulation of the non-native substrate proteins and provides a physical environment optimized to promote and accelerate protein folding. GroES binds to the apical surface of the GroEL ring, thereby capping the opening of the GroEL channel. In Sodalis glossinidius (strain morsitans), this protein is Co-chaperonin GroES.